Reading from the N-terminus, the 197-residue chain is Recombination protein RecR (197 aa).

A C4-type zinc finger spans residues 56-71 (CNVCFHFSADPICEIC). The Toprim domain occupies 79-173 (QTICVVADSR…KVTRIAFGLP (95 aa)).

This sequence belongs to the RecR family.

In terms of biological role, may play a role in DNA repair. It seems to be involved in an RecBC-independent recombinational process of DNA repair. It may act with RecF and RecO. This is Recombination protein RecR from Rippkaea orientalis (strain PCC 8801 / RF-1) (Cyanothece sp. (strain PCC 8801)).